We begin with the raw amino-acid sequence, 528 residues long: Na(+)/H(+) antiporter NhaB (528 aa).

10 consecutive transmembrane segments (helical) span residues 25–47 (IISFLVINPIVFYFNPFIAGWLL), 66–86 (PGGLLAIEAVAIGMTSPSQVL), 97–117 (LLLVFMVAGIYFMKQLLLFVF), 130–164 (VSLLFCVSSAFLSAFLDALTVIAVIITVAVGFYSI), 241–261 (IRMSPVTVPVFFAGVTTCFLV), 304–324 (AFIGVWLIAGLALHLASVGLI), 351–371 (ALPFTALLAVFFAIVAVIIDL), 390–410 (LVVFYIANGLLSMVSDNVFVG), 448–468 (ATPNGQAAFLFLLTSAIAPLI), and 476–496 (VWMALPYTIVLSIVGVLAIQL).

This sequence belongs to the NhaB Na(+)/H(+) (TC 2.A.34) antiporter family.

It is found in the cell inner membrane. It catalyses the reaction 2 Na(+)(in) + 3 H(+)(out) = 2 Na(+)(out) + 3 H(+)(in). In terms of biological role, na(+)/H(+) antiporter that extrudes sodium in exchange for external protons. In Shewanella halifaxensis (strain HAW-EB4), this protein is Na(+)/H(+) antiporter NhaB.